Reading from the N-terminus, the 250-residue chain is ATP synthase subunit a (250 aa).

Transmembrane regions (helical) follow at residues 26–46 (FTNA…FLYL), 84–104 (FFPM…LGMF), 114–134 (IIVT…YGFY), 143–163 (LFVP…IEVI), 193–213 (FVAS…LPLI), and 216–236 (VALT…FAVL).

Belongs to the ATPase A chain family. In terms of assembly, F-type ATPases have 2 components, CF(1) - the catalytic core - and CF(0) - the membrane proton channel. CF(1) has five subunits: alpha(3), beta(3), gamma(1), delta(1), epsilon(1). CF(0) has three main subunits: a(1), b(2) and c(9-12). The alpha and beta chains form an alternating ring which encloses part of the gamma chain. CF(1) is attached to CF(0) by a central stalk formed by the gamma and epsilon chains, while a peripheral stalk is formed by the delta and b chains.

It is found in the cell inner membrane. Its function is as follows. Key component of the proton channel; it plays a direct role in the translocation of protons across the membrane. In Sinorhizobium fredii (strain NBRC 101917 / NGR234), this protein is ATP synthase subunit a.